The chain runs to 220 residues: MGKKINPLGFRLGANQSHRSIWFAQSKSYSRGLQEDEKIRDCIQHYVEKNTRISSGFEGKGISHIEIQKKIDLIQVIIYMGSPNSLMEGRTRGIDELQTNVQKEFLSVNRRLNIAIIRVAKPYAQPTILAEHIALQLKNRVSFRKAMKSAIELTEQADTKGIQIQIAGRIDGKEIARVEWIREGRVPLQTIRAKIDYCSYTVRTIYGILGIKIWIFLDEK.

Residues 43–120 form the KH type-2 domain; sequence IQHYVEKNTR…RLNIAIIRVA (78 aa).

The protein belongs to the universal ribosomal protein uS3 family. As to quaternary structure, part of the 30S ribosomal subunit.

The protein localises to the plastid. It is found in the chloroplast. The protein is Small ribosomal subunit protein uS3c (rps3) of Piper cenocladum (Ant piper).